Reading from the N-terminus, the 288-residue chain is Programmed cell death protein 1 (288 aa).

Residues 1 to 24 form the signal peptide; sequence MQIPQAPWPVVWAVLQLGWRPGWF. Positions 25–34 are nivolumab binding; the sequence is LDSPDRPWNP. Over 25-170 the chain is Extracellular; the sequence is LDSPDRPWNP…RPAGQFQTLV (146 aa). An Ig-like V-type domain is found at 35–145; sequence PTFSPALLVV…ESLRAELRVT (111 aa). N-linked (GlcNAc...) asparagine glycosylation is found at Asn-49, Asn-58, Asn-74, and Asn-116. Cys-54 and Cys-123 are joined by a disulfide. Residues 70 to 77 are interaction with CD274/PDCD1L1; the sequence is MSPSNQTD. The pembrolizumab binding stretch occupies residues 74-99; sequence NQTDKLAAFPEDRSQPGQDCRFRVTQ. A helical membrane pass occupies residues 171 to 191; it reads VGVVGGLLGSLVLLVWVLAVI. At 192 to 288 the chain is on the cytoplasmic side; sequence CSRAARGTIG…PEDGHCSWPL (97 aa). The short motif at 221-226 is the ITIM motif element; it reads VDYGEL. Position 223 is a phosphotyrosine (Tyr-223). Lys-233 is covalently cross-linked (Glycyl lysine isopeptide (Lys-Gly) (interchain with G-Cter in ubiquitin)). Thr-234 bears the Phosphothreonine; by MAPK3 mark. Positions 247-251 match the ITSM motif motif; sequence EYATI. Position 248 is a phosphotyrosine (Tyr-248). Residues 254–288 are disordered; the sequence is PSGMGTSSPARRGSADGPRSAQPLRPEDGHCSWPL. The segment covering 278–288 has biased composition (basic and acidic residues); that stretch reads RPEDGHCSWPL.

As to quaternary structure, monomer. Interacts with CD274/PDCD1L1. Interacts with CD273/PDCD1LG2. Interacts with FBXO38; leading to ubiquitination and degradation of PDCD1 by the proteasome. Ubiquitinated at Lys-233 by the SCF(FBXO38) complex, leading to its proteasomal degradation. Ubiquitinated via 'Lys-48'-linked polyubiquitin chains. Deubiquitinated and thus stabilized by USP5. In terms of processing, tyrosine phosphorylated at Tyr-223 (within ITIM motif) and Tyr-248 (ITSM motif) upon ligand binding. Phosphorylation at Tyr-248 promotes the recruitment of the protein tyrosine phosphatase PTPN11/SHP-2 that mediates dephosphorylation of key TCR proximal signaling molecules, such as ZAP70, PRKCQ/PKCtheta and CD247/CD3zeta. Phosphorylation at Thr-234 promotes the recruitment of the deubiquitinase USP5. Post-translationally, N-glycosylation at Asn-58 contains at least two N-acetylglucosamine units and one fucose. N-glycosylation does not affect binding to nivolumab drug.

The protein localises to the cell membrane. Its activity is regulated as follows. Inhibited by pembrolizumab (also named MK-3475 or lambrolizumab), a monoclonal antibody that prevents the interaction with CD274/PDCD1L1. Inhibited by nivolumab (also named ONO-4538, BMS-936558 or Opdivo), a monoclonal antibody that prevents the interaction with CD274/PDCD1L1. The interaction with nivolumab is not dependent on glycosylation and depends on a loop at the N-terminus (N-terminal loop, corresponding to residues 25-34). Targeting the interaction between PDCD1 and CD274/PDCD1L1 with pembrolizumab and nivolumab antibodies has demonstrated great promise as a strategy for controlling and eradicating cancer. Pembrolizumab and nivolumab are used for treatment of patients with advanced melanoma. These antibodies are also effective against other cancers, such as non-small cell lung cancer, renal cell carcinoma, bladder cancer and Hodgkin's lymphoma. Inhibitory receptor on antigen activated T-cells that plays a critical role in induction and maintenance of immune tolerance to self. Delivers inhibitory signals upon binding to ligands CD274/PDCD1L1 and CD273/PDCD1LG2. Following T-cell receptor (TCR) engagement, PDCD1 associates with CD3-TCR in the immunological synapse and directly inhibits T-cell activation. Suppresses T-cell activation through the recruitment of PTPN11/SHP-2: following ligand-binding, PDCD1 is phosphorylated within the ITSM motif, leading to the recruitment of the protein tyrosine phosphatase PTPN11/SHP-2 that mediates dephosphorylation of key TCR proximal signaling molecules, such as ZAP70, PRKCQ/PKCtheta and CD247/CD3zeta. Its function is as follows. The PDCD1-mediated inhibitory pathway is exploited by tumors to attenuate anti-tumor immunity and escape destruction by the immune system, thereby facilitating tumor survival. The interaction with CD274/PDCD1L1 inhibits cytotoxic T lymphocytes (CTLs) effector function. The blockage of the PDCD1-mediated pathway results in the reversal of the exhausted T-cell phenotype and the normalization of the anti-tumor response, providing a rationale for cancer immunotherapy. This chain is Programmed cell death protein 1, found in Homo sapiens (Human).